The following is a 565-amino-acid chain: NAD-dependent malic enzyme (565 aa).

Y104 serves as the catalytic Proton donor. Position 157 (R157) interacts with NAD(+). K175 (proton acceptor) is an active-site residue. The a divalent metal cation site is built by E246, D247, and D270. D270 and N418 together coordinate NAD(+).

Belongs to the malic enzymes family. In terms of assembly, homotetramer. It depends on Mg(2+) as a cofactor. Requires Mn(2+) as cofactor.

The enzyme catalyses (S)-malate + NAD(+) = pyruvate + CO2 + NADH. The catalysed reaction is oxaloacetate + H(+) = pyruvate + CO2. This is NAD-dependent malic enzyme from Pectobacterium atrosepticum (strain SCRI 1043 / ATCC BAA-672) (Erwinia carotovora subsp. atroseptica).